Here is a 415-residue protein sequence, read N- to C-terminus: Gamma-glutamyl phosphate reductase (415 aa).

It belongs to the gamma-glutamyl phosphate reductase family.

It localises to the cytoplasm. The catalysed reaction is L-glutamate 5-semialdehyde + phosphate + NADP(+) = L-glutamyl 5-phosphate + NADPH + H(+). The protein operates within amino-acid biosynthesis; L-proline biosynthesis; L-glutamate 5-semialdehyde from L-glutamate: step 2/2. Catalyzes the NADPH-dependent reduction of L-glutamate 5-phosphate into L-glutamate 5-semialdehyde and phosphate. The product spontaneously undergoes cyclization to form 1-pyrroline-5-carboxylate. The protein is Gamma-glutamyl phosphate reductase of Listeria monocytogenes serotype 4a (strain HCC23).